The following is a 467-amino-acid chain: ATP-dependent protease ATPase subunit HslU (467 aa).

ATP is bound by residues valine 22 and 64–69 (GVGKTE). The tract at residues 149 to 192 (QTNNPLESLFGGAIPNFGQNNEDEEEPPTEEIKTKRSEIKRQLE) is disordered. The span at 178–192 (EEIKTKRSEIKRQLE) shows a compositional bias: basic and acidic residues. ATP-binding residues include aspartate 280, glutamate 345, and arginine 417.

It belongs to the ClpX chaperone family. HslU subfamily. In terms of assembly, a double ring-shaped homohexamer of HslV is capped on each side by a ring-shaped HslU homohexamer. The assembly of the HslU/HslV complex is dependent on binding of ATP.

Its subcellular location is the cytoplasm. ATPase subunit of a proteasome-like degradation complex; this subunit has chaperone activity. The binding of ATP and its subsequent hydrolysis by HslU are essential for unfolding of protein substrates subsequently hydrolyzed by HslV. HslU recognizes the N-terminal part of its protein substrates and unfolds these before they are guided to HslV for hydrolysis. This chain is ATP-dependent protease ATPase subunit HslU, found in Staphylococcus aureus (strain bovine RF122 / ET3-1).